A 177-amino-acid polypeptide reads, in one-letter code: Bifunctional protein PyrR (177 aa).

Residues 99 to 111 carry the PRPP-binding motif; the sequence is VVLVDDVLFTGRT.

It belongs to the purine/pyrimidine phosphoribosyltransferase family. PyrR subfamily.

The enzyme catalyses UMP + diphosphate = 5-phospho-alpha-D-ribose 1-diphosphate + uracil. Functionally, regulates the transcription of the pyrimidine nucleotide (pyr) operon in response to exogenous pyrimidines. In terms of biological role, also displays a weak uracil phosphoribosyltransferase activity which is not physiologically significant. This chain is Bifunctional protein PyrR, found in Geobacter sp. (strain M21).